The chain runs to 828 residues: MKNKLINLRSKHIYKLIIIIFFCIILKYYKWCDFKNKVFFIQLVYSFAKKSVCTSSLDDSTCHTVTFGELDVSNNSVVRLKVMRKGGKGYFLTIRRDYVTVSYYLKYVKDIPLEFREIIDIFNNHKFEQYTQEQINKYTYTCNVRKIEDIDKYDEKNPTKFHEYTRGEACRCQTYNYFKDDEFIKRAKLKCIYYNMLFTESATVYSRHCPIIDLMHFAVYDIEYPPIFNTIVNITIEEYYYNDVSSVLNNKSDLVTKEKKYQLNDTITEIRDDYFDLWLFLKGETHGKRTLVNLSNDYIVIPSSPINNRDVIASDITRNCGLSQNSPLLKGCNYSSICNIMHPCLRKAMMLPKYMFDLSGKTCGKLGVSLNTWRKSEGNFCGSEAGYCISNNLKKYYDIHNSASIKDGISLSKYKIKNIYNSEPQTKIYESYKLPDYLKDKIKNNNHAEMDENDLDNKIFYKPNVAAHSQFIDYKYNGNHSVEIKFETDAIEVYEIRPVSIATITHVTIPNDCASNNSNSNECVLIIHVWNNSKFVGSNFSCSIACTNKETDQLASHINPIAPVRAFIGPNKNYAFYFIIKFLINKEITTLCKAIVKDSNGKECSIEEFELQSKESVHIVESEVDETTDQVVVEHHTQSPDIKNPDEYVCKCTINLLCYVINFKTCSNYYINTVKTLIGKFAIIAILIILAPALIPLLPFFLNFFFLFISTILKLYQSIISTIGQIRIRNNDKPIIYKKKIHDMKTNYLSVSSYSSLSDSSSIYSTDSVSSMRKNKKKFNKNNISSNIKHKKGGKKVKQKEPNRNSNHTSHEYADTSPSGKSKIPPLR.

The first 32 residues, 1–32, serve as a signal peptide directing secretion; sequence MKNKLINLRSKHIYKLIIIIFFCIILKYYKWC. The Extracellular portion of the chain corresponds to 33–680; that stretch reads DFKNKVFFIQ…INTVKTLIGK (648 aa). Cys53 and Cys62 are oxidised to a cystine. Asn74 is a glycosylation site (N-linked (GlcNAc...) asparagine). 4 cysteine pairs are disulfide-bonded: Cys142-Cys209, Cys170-Cys381, Cys172-Cys191, and Cys363-Cys388. Residues 174–191 are cd loop; involved in gamete fusion; it reads TYNYFKDDEFIKRAKLKC. Asn233, Asn250, Asn264, Asn293, and Asn333 each carry an N-linked (GlcNAc...) asparagine glycan. N-linked (GlcNAc...) asparagine glycosylation is found at Asn479, Asn516, Asn531, and Asn539. Cys546 and Cys592 form a disulfide bridge. Residues 681-701 traverse the membrane as a helical segment; it reads FAIIAILIILAPALIPLLPFF. The Cytoplasmic segment spans residues 702 to 828; the sequence is LNFFFLFIST…SGKSKIPPLR (127 aa). Residues 773–828 are disordered; that stretch reads RKNKKKFNKNNISSNIKHKKGGKKVKQKEPNRNSNHTSHEYADTSPSGKSKIPPLR. Basic residues predominate over residues 788–798; it reads IKHKKGGKKVK. Residues 799-814 are compositionally biased toward basic and acidic residues; the sequence is QKEPNRNSNHTSHEYA.

This sequence belongs to the HAP2/GCS1 family.

Its subcellular location is the cell membrane. Functionally, during fertilization, required on male gametes for their fusion with female gametes, and for subsequent ookinete formation in the host. Thereby, required for mosquito-mediated transmission to other animals. Probably initiates the fusion of gamete cell membranes by inserting part of its extracellular domain into the cell membrane of a female gamete. This Plasmodium berghei (strain Anka) protein is Hapless 2.